A 245-amino-acid polypeptide reads, in one-letter code: uncharacterized protein (245 aa).

Residues 33–176 (QRAAYQQVQA…SSQRDMLTAT (144 aa)) adopt a coiled-coil conformation.

This is an uncharacterized protein from Mycobacterium tuberculosis (strain CDC 1551 / Oshkosh).